Consider the following 153-residue polypeptide: 6,7-dimethyl-8-ribityllumazine synthase (153 aa).

Residues Phe-21, 55–57 (AFE), and 79–81 (TVI) contribute to the 5-amino-6-(D-ribitylamino)uracil site. 84–85 (AT) serves as a coordination point for (2S)-2-hydroxy-3-oxobutyl phosphate. Residue His-87 is the Proton donor of the active site. Phe-112 contacts 5-amino-6-(D-ribitylamino)uracil. Arg-126 lines the (2S)-2-hydroxy-3-oxobutyl phosphate pocket.

This sequence belongs to the DMRL synthase family. In terms of assembly, forms an icosahedral capsid composed of 60 subunits, arranged as a dodecamer of pentamers.

The enzyme catalyses (2S)-2-hydroxy-3-oxobutyl phosphate + 5-amino-6-(D-ribitylamino)uracil = 6,7-dimethyl-8-(1-D-ribityl)lumazine + phosphate + 2 H2O + H(+). It participates in cofactor biosynthesis; riboflavin biosynthesis; riboflavin from 2-hydroxy-3-oxobutyl phosphate and 5-amino-6-(D-ribitylamino)uracil: step 1/2. In terms of biological role, catalyzes the formation of 6,7-dimethyl-8-ribityllumazine by condensation of 5-amino-6-(D-ribitylamino)uracil with 3,4-dihydroxy-2-butanone 4-phosphate. This is the penultimate step in the biosynthesis of riboflavin. The sequence is that of 6,7-dimethyl-8-ribityllumazine synthase from Bacillus cereus (strain ATCC 10987 / NRS 248).